Reading from the N-terminus, the 476-residue chain is Ubiquitin-conjugating enzyme E2 variant 3 (476 aa).

The 144-residue stretch at 2–145 (EFSAETLRQQ…EEELPLYSLS (144 aa)) folds into the UEV domain. 185 to 213 (GDMALACLLAVSAKGTAGKLLLLDPTDGE) provides a ligand contact to NAD(+).

This sequence in the N-terminal section; belongs to the ubiquitin-conjugating enzyme family. UEV subfamily. The protein in the C-terminal section; belongs to the LDH/MDH superfamily. Homodimer.

In terms of biological role, possible negative regulator of polyubiquitination. This chain is Ubiquitin-conjugating enzyme E2 variant 3 (uevld), found in Xenopus tropicalis (Western clawed frog).